A 791-amino-acid polypeptide reads, in one-letter code: Ribosome biogenesis protein ERB1 (791 aa).

Over residues 1–12 (MARKNSSLNGSE) the composition is skewed to polar residues. 2 disordered regions span residues 1–60 (MARK…DDSD) and 68–87 (AEEE…SEEG). Composition is skewed to acidic residues over residues 25 to 60 (ESEL…DDSD) and 69 to 87 (EEEN…SEEG). The interval 254-372 (RFVPSKHEAK…LRKVPGYSES (119 aa)) is required for interaction with NOP7. The tract at residues 372-408 (SVRERFERSLDLYLAPRVRKNKLNIDPESLIPELPST) is required for interaction with YTM1. 7 WD repeats span residues 424 to 463 (GHKG…EVYQ), 472 to 512 (NNDD…FEIE), 576 to 618 (TCRK…TQSP), 621 to 659 (KSKG…LIKK), 662 to 701 (PGAR…TPYK), 705 to 744 (YHEK…DLMK), and 760 to 791 (VNSL…LWTT).

It belongs to the WD repeat BOP1/ERB1 family. In terms of assembly, component of the NOP7 complex, composed of ERB1, NOP7 and YTM1. The complex is held together by ERB1, which interacts with NOP7 via its N-terminal domain and with YTM1 via a high-affinity interaction between the seven-bladed beta-propeller domains of the 2 proteins. The NOP7 complex associates with the 66S pre-ribosome.

It is found in the nucleus. The protein localises to the nucleolus. The protein resides in the nucleoplasm. Component of the NOP7 complex, which is required for maturation of the 25S and 5.8S ribosomal RNAs and formation of the 60S ribosome. The protein is Ribosome biogenesis protein ERB1 of Kluyveromyces lactis (strain ATCC 8585 / CBS 2359 / DSM 70799 / NBRC 1267 / NRRL Y-1140 / WM37) (Yeast).